A 310-amino-acid chain; its full sequence is tRNA pseudouridine synthase B (310 aa).

The active-site Nucleophile is the Asp49.

The protein belongs to the pseudouridine synthase TruB family. Type 1 subfamily.

The enzyme catalyses uridine(55) in tRNA = pseudouridine(55) in tRNA. Its function is as follows. Responsible for synthesis of pseudouridine from uracil-55 in the psi GC loop of transfer RNAs. This Idiomarina loihiensis (strain ATCC BAA-735 / DSM 15497 / L2-TR) protein is tRNA pseudouridine synthase B.